The primary structure comprises 101 residues: MAKKSKIAKNEQRREIVARYAARRAELKEVLRRPSSTEAERLAAQRELRRQPRDASPTRVRNRDQIDGRPRGYLRVFGLSRVNLREQAHAGHLPGVRKSSW.

The segment at 31–67 is disordered; that stretch reads LRRPSSTEAERLAAQRELRRQPRDASPTRVRNRDQID. Residues 38-53 are compositionally biased toward basic and acidic residues; it reads EAERLAAQRELRRQPR.

Belongs to the universal ribosomal protein uS14 family. In terms of assembly, part of the 30S ribosomal subunit. Contacts proteins S3 and S10.

Functionally, binds 16S rRNA, required for the assembly of 30S particles and may also be responsible for determining the conformation of the 16S rRNA at the A site. This is Small ribosomal subunit protein uS14A from Streptomyces coelicolor (strain ATCC BAA-471 / A3(2) / M145).